The primary structure comprises 587 residues: GATA zinc finger domain-containing protein 3 (587 aa).

The span at 53-74 shows a compositional bias: low complexity; it reads NINNNINNNNNNNNNNNNNNIN. Disordered regions lie at residues 53 to 141, 179 to 294, and 312 to 392; these read NINN…LKIP, QLAH…SSPS, and QTSP…ATIN. Residues 75-86 show a composition bias toward polar residues; sequence QYHQNHYDQYSD. Composition is skewed to low complexity over residues 87-136, 183-202, 237-264, 272-292, and 316-333; these read NNCN…NNNN, NSSM…TPTS, NING…INNG, GNNN…NSSS, and SQQS…QQSQ. Composition is skewed to polar residues over residues 340–358 and 365–379; these read INTT…TNSP and NESS…TPLS. The GATA-type zinc-finger motif lies at 500–525; the sequence is CIFCGTMETPEWRKGPGGHKTLCNAC. The tract at residues 536–587 is disordered; the sequence is ENQNNGGSPNPQQNNVTTTTTTTTSTSTNSPNSNGNNFSPESAMSVSKLISD. Residues 538-575 are compositionally biased toward low complexity; that stretch reads QNNGGSPNPQQNNVTTTTTTTTSTSTNSPNSNGNNFSP. Positions 577–587 are enriched in polar residues; that stretch reads SAMSVSKLISD.

The polypeptide is GATA zinc finger domain-containing protein 3 (gtaC) (Dictyostelium discoideum (Social amoeba)).